Reading from the N-terminus, the 396-residue chain is Chaperone protein DnaJ 1 (396 aa).

The region spanning 10–75 (DYYKVLGVPK…KKRKEYDEAR (66 aa)) is the J domain. Residues 127–137 (LFNRGGAGPGT) show a composition bias toward gly residues. The disordered stretch occupies residues 127 to 149 (LFNRGGAGPGTGTRTQPRRGQDI). The segment at 163-241 (GATVPLRMSS…CKGSGRAKSS (79 aa)) adopts a CR-type zinc-finger fold. Zn(2+) is bound by residues Cys176, Cys179, Cys192, Cys195, Cys215, Cys218, Cys229, and Cys232. CXXCXGXG motif repeat units follow at residues 176–183 (CKACSGTG), 192–199 (CPTCVGTG), 215–222 (CPDCKGRG), and 229–236 (CEICKGSG).

This sequence belongs to the DnaJ family. In terms of assembly, homodimer. Requires Zn(2+) as cofactor.

Its subcellular location is the cytoplasm. Functionally, participates actively in the response to hyperosmotic and heat shock by preventing the aggregation of stress-denatured proteins and by disaggregating proteins, also in an autonomous, DnaK-independent fashion. Unfolded proteins bind initially to DnaJ; upon interaction with the DnaJ-bound protein, DnaK hydrolyzes its bound ATP, resulting in the formation of a stable complex. GrpE releases ADP from DnaK; ATP binding to DnaK triggers the release of the substrate protein, thus completing the reaction cycle. Several rounds of ATP-dependent interactions between DnaJ, DnaK and GrpE are required for fully efficient folding. Also involved, together with DnaK and GrpE, in the DNA replication of plasmids through activation of initiation proteins. The protein is Chaperone protein DnaJ 1 of Streptomyces avermitilis (strain ATCC 31267 / DSM 46492 / JCM 5070 / NBRC 14893 / NCIMB 12804 / NRRL 8165 / MA-4680).